A 218-amino-acid polypeptide reads, in one-letter code: Small ribosomal subunit protein uS3c (218 aa).

Positions 47–118 (VQKNMRTSSG…KLNIAVTRIA (72 aa)) constitute a KH type-2 domain.

The protein belongs to the universal ribosomal protein uS3 family. Part of the 30S ribosomal subunit.

Its subcellular location is the plastid. The protein localises to the chloroplast. The protein is Small ribosomal subunit protein uS3c (rps3) of Solanum lycopersicum (Tomato).